A 164-amino-acid chain; its full sequence is C-type natriuretic peptide (164 aa).

An N-terminal signal peptide occupies residues 1 to 23 (MVASRLAAGGLLLLALLALALDG). Disordered stretches follow at residues 24-93 (KPAP…AAAA) and 115-134 (HPEHHAGGGGGGGGGGGASR). Positions 24-142 (KPAPPQPLRK…SRRLKGVAKK (119 aa)) are excised as a propeptide. Over residues 58 to 67 (AGGGGGGGRS) the composition is skewed to gly residues. The span at 68 to 93 (GSKAANAAPTAPKSKGGAAAAAAAAA) shows a compositional bias: low complexity. Gly residues predominate over residues 121–132 (GGGGGGGGGGGA). A disulfide bridge connects residues Cys148 and Cys164.

This sequence belongs to the natriuretic peptide family. Expressed by the venom gland.

It localises to the secreted. Functionally, snake venom natriuretic peptide that has a vasorelaxant activity in rat aortic strips and a diuretic potency in anesthetized rats. May act by activating natriuretic receptors (NPR1 and/or NPR2). In Philodryas olfersii (Green snake), this protein is C-type natriuretic peptide.